The following is a 254-amino-acid chain: Splicing factor tls1 (254 aa).

Residues Lys69–Asn83 show a composition bias toward basic and acidic residues. Disordered stretches follow at residues Lys69–Ser90 and Arg195–Ser216. Positions Arg195–Met204 are enriched in basic residues. Basic and acidic residues predominate over residues Lys205 to Ser216.

It belongs to the TLS1 family. As to quaternary structure, component of the spliceosome. Interacts with brr2.

Its subcellular location is the cytoplasm. The protein resides in the nucleus. Functionally, plays a role in pre-mRNA splicing by facilitating excision of introns featuring long spacing between the branchpoint and 3'-splice site. Assists the splicing of several components involved in chromatin organization, such as several shelterin complex subunits. This chain is Splicing factor tls1, found in Schizosaccharomyces pombe (strain 972 / ATCC 24843) (Fission yeast).